The primary structure comprises 311 residues: tRNA dimethylallyltransferase (311 aa).

Residue 13 to 20 coordinates ATP; that stretch reads GPTASGKT. 15–20 contributes to the substrate binding site; that stretch reads TASGKT. Interaction with substrate tRNA regions lie at residues 38 to 41 and 166 to 170; these read DSMQ and QRVLR.

It belongs to the IPP transferase family. As to quaternary structure, monomer. Mg(2+) serves as cofactor.

It carries out the reaction adenosine(37) in tRNA + dimethylallyl diphosphate = N(6)-dimethylallyladenosine(37) in tRNA + diphosphate. Functionally, catalyzes the transfer of a dimethylallyl group onto the adenine at position 37 in tRNAs that read codons beginning with uridine, leading to the formation of N6-(dimethylallyl)adenosine (i(6)A). In Staphylococcus aureus (strain Mu3 / ATCC 700698), this protein is tRNA dimethylallyltransferase.